Here is a 205-residue protein sequence, read N- to C-terminus: Ribosomal RNA small subunit methyltransferase J (205 aa).

S-adenosyl-L-methionine contacts are provided by residues 56–57 (RD), 72–73 (ER), and D124.

This sequence belongs to the methyltransferase superfamily. RsmJ family.

It is found in the cytoplasm. It catalyses the reaction guanosine(1516) in 16S rRNA + S-adenosyl-L-methionine = N(2)-methylguanosine(1516) in 16S rRNA + S-adenosyl-L-homocysteine + H(+). In terms of biological role, specifically methylates the guanosine in position 1516 of 16S rRNA. In Brucella anthropi (strain ATCC 49188 / DSM 6882 / CCUG 24695 / JCM 21032 / LMG 3331 / NBRC 15819 / NCTC 12168 / Alc 37) (Ochrobactrum anthropi), this protein is Ribosomal RNA small subunit methyltransferase J.